The chain runs to 582 residues: Calcium-dependent protein kinase 24 (582 aa).

The segment at Met-1–Asp-36 is disordered. Gly-2 is lipidated: N-myristoyl glycine. The region spanning Tyr-66–Ile-324 is the Protein kinase domain. ATP is bound by residues Leu-72–Thr-80 and Lys-95. Residue Asp-190 is the Proton acceptor of the active site. Position 230 is a phosphoserine (Ser-230). The autoinhibitory domain stretch occupies residues Ala-330–Val-360. EF-hand domains are found at residues Glu-367 to Val-402, Val-403 to Met-438, Gly-439 to Gly-474, and Gly-478 to Trp-513. Ca(2+)-binding residues include Asp-380, Asp-382, Asn-384, His-386, Glu-391, Asp-416, Asp-418, Asn-420, Met-422, Glu-427, Asp-452, Asn-454, Asn-456, Glu-463, Asp-491, Asn-493, Asp-495, and Arg-497. Ser-499 is subject to Phosphoserine. A Ca(2+)-binding site is contributed by Glu-502.

This sequence belongs to the protein kinase superfamily. Ser/Thr protein kinase family. CDPK subfamily.

The protein localises to the membrane. It carries out the reaction L-seryl-[protein] + ATP = O-phospho-L-seryl-[protein] + ADP + H(+). It catalyses the reaction L-threonyl-[protein] + ATP = O-phospho-L-threonyl-[protein] + ADP + H(+). With respect to regulation, activated by calcium. Autophosphorylation may play an important role in the regulation of the kinase activity. Its function is as follows. May play a role in signal transduction pathways that involve calcium as a second messenger. This chain is Calcium-dependent protein kinase 24 (CPK24), found in Arabidopsis thaliana (Mouse-ear cress).